The primary structure comprises 234 residues: Uridylate kinase (234 aa).

9-12 (KLSG) lines the ATP pocket. Residue G51 coordinates UMP. Residues G52 and R56 each coordinate ATP. Residues D71 and 132–139 (CGNPFFTT) each bind UMP. The ATP site is built by T159, Y165, and D168.

It belongs to the UMP kinase family. Homohexamer.

The protein localises to the cytoplasm. The enzyme catalyses UMP + ATP = UDP + ADP. The protein operates within pyrimidine metabolism; CTP biosynthesis via de novo pathway; UDP from UMP (UMPK route): step 1/1. Its activity is regulated as follows. Inhibited by UTP. Functionally, catalyzes the reversible phosphorylation of UMP to UDP. In Prochlorococcus marinus subsp. pastoris (strain CCMP1986 / NIES-2087 / MED4), this protein is Uridylate kinase.